We begin with the raw amino-acid sequence, 523 residues long: Galactarate dehydratase (L-threo-forming) (523 aa).

This sequence belongs to the UxaA family. In terms of assembly, homodimer. Fe(2+) is required as a cofactor.

It catalyses the reaction galactarate = 5-dehydro-4-deoxy-D-glucarate + H2O. It participates in carbohydrate acid metabolism; galactarate degradation; D-glycerate from galactarate: step 1/3. Functionally, catalyzes the dehydration of galactarate to form 5-dehydro-4-deoxy-D-glucarate (5-KDG). The protein is Galactarate dehydratase (L-threo-forming) of Escherichia coli (strain K12).